Reading from the N-terminus, the 621-residue chain is tRNA uridine 5-carboxymethylaminomethyl modification enzyme MnmG (621 aa).

11 to 16 lines the FAD pocket; sequence GGGHAG. 270-284 serves as a coordination point for NAD(+); that stretch reads GPRYCPSIEDKINRF.

It belongs to the MnmG family. Homodimer. Heterotetramer of two MnmE and two MnmG subunits. The cofactor is FAD.

It is found in the cytoplasm. Its function is as follows. NAD-binding protein involved in the addition of a carboxymethylaminomethyl (cmnm) group at the wobble position (U34) of certain tRNAs, forming tRNA-cmnm(5)s(2)U34. The sequence is that of tRNA uridine 5-carboxymethylaminomethyl modification enzyme MnmG from Helicobacter pylori (strain Shi470).